Here is a 275-residue protein sequence, read N- to C-terminus: Large ribosomal subunit protein uL2 (275 aa).

Disordered stretches follow at residues 24 to 48 and 224 to 264; these read LTTD…NAGD and VMNP…NKRT. Over residues 31 to 42 the composition is skewed to basic residues; it reads KPLTKTKQRTGG.

This sequence belongs to the universal ribosomal protein uL2 family. In terms of assembly, part of the 50S ribosomal subunit. Forms a bridge to the 30S subunit in the 70S ribosome.

Functionally, one of the primary rRNA binding proteins. Required for association of the 30S and 50S subunits to form the 70S ribosome, for tRNA binding and peptide bond formation. It has been suggested to have peptidyltransferase activity; this is somewhat controversial. Makes several contacts with the 16S rRNA in the 70S ribosome. The polypeptide is Large ribosomal subunit protein uL2 (Koribacter versatilis (strain Ellin345)).